A 194-amino-acid polypeptide reads, in one-letter code: Large ribosomal subunit protein bL9 (194 aa).

The span at 156-167 (RGEDISSRREDQ) shows a compositional bias: basic and acidic residues. The segment at 156 to 194 (RGEDISSRREDQDAAAEAIAAAGEFFDPDAQQDEEPEQQ) is disordered. Residues 181–194 (FDPDAQQDEEPEQQ) are compositionally biased toward acidic residues.

The protein belongs to the bacterial ribosomal protein bL9 family.

Binds to the 23S rRNA. The sequence is that of Large ribosomal subunit protein bL9 from Rhodopseudomonas palustris (strain BisB5).